The following is a 328-amino-acid chain: Putative UDP-N-acetylglucosamine--dolichyl-phosphate N-acetylglucosaminephosphotransferase (328 aa).

9 helical membrane-spanning segments follow: residues 1-21, 48-68, 78-98, 107-127, 129-149, 166-186, 192-212, 228-248, and 301-321; these read MLVSLLGILLSVIVGFVVTLI, VPVLGGIGIVAGFVAGSFTFL, IENVVVSILLSSLIIGFLGLL, ATRAFLPIFASIPLILYSVGH, IISIPFLGKVNFGILFYIIIL, LNGLGAGMGLIMALALAYIGL, SFYAGIVSIILASVLFGFLIF, FIGSVIGSIGISGYMYTALFF, and YHIVLIIWGIEILFAILAVVF.

It belongs to the glycosyltransferase 4 family.

It localises to the cell membrane. The catalysed reaction is a di-trans,poly-cis-dolichyl phosphate + UDP-N-acetyl-alpha-D-glucosamine = an N-acetyl-alpha-D-glucosaminyl-diphospho-di-trans,poly-cis-dolichol + UMP. With respect to regulation, inhibited by tunicamycin. This chain is Putative UDP-N-acetylglucosamine--dolichyl-phosphate N-acetylglucosaminephosphotransferase (gnpTA), found in Sulfolobus acidocaldarius (strain ATCC 33909 / DSM 639 / JCM 8929 / NBRC 15157 / NCIMB 11770).